Reading from the N-terminus, the 477-residue chain is TNF receptor-associated factor family protein DDB_G0278133 (477 aa).

The segment at Cys45–Lys88 adopts an RING-type; degenerate zinc-finger fold. 2 TRAF-type zinc fingers span residues Asn160–Ser211 and Asp212–Gln267. The stretch at Leu271 to Ser326 forms a coiled coil. The region spanning Val331–Ile463 is the MATH domain.

Belongs to the TNF receptor-associated factor family. A subfamily.

The protein localises to the cytoplasm. Probable adapter protein and signal transducer that links members of the tumor necrosis factor receptor family to different signaling pathways by association with the receptor cytoplasmic domain and kinases. This Dictyostelium discoideum (Social amoeba) protein is TNF receptor-associated factor family protein DDB_G0278133.